Reading from the N-terminus, the 355-residue chain is CX3C chemokine receptor 1 (355 aa).

Over 1 to 31 the chain is Extracellular; the sequence is MDQFPESVTENFEYDDLAEACYIGDIVVFGT. The helical transmembrane segment at 32–59 threads the bilayer; that stretch reads VFLSIFYSVIFAIGLVGNLLVVFALTNS. Topologically, residues 60–69 are cytoplasmic; sequence KKPKSVTDIY. Residues 70–90 traverse the membrane as a helical segment; sequence LLNLALSDLLFVATLPFWTHY. Residues 91 to 103 are Extracellular-facing; that stretch reads LINEKGLHNAMCK. A disulfide bridge links cysteine 102 with cysteine 175. A helical transmembrane segment spans residues 104–125; that stretch reads FTTAFFFIGFFGSIFFITVISI. Residues 126-142 lie on the Cytoplasmic side of the membrane; it reads DRYLAIVLAANSMNNRT. A helical transmembrane segment spans residues 143–167; that stretch reads VQHGVTISLGVWAAAILVAAPQFMF. The Extracellular portion of the chain corresponds to 168-195; sequence TKQKENECLGDYPEVLQEIWPVLRNVET. Residues 196–215 form a helical membrane-spanning segment; sequence NFLGFLLPLLIMSYCYFRII. Over 216–231 the chain is Cytoplasmic; sequence QTLFSCKNHKKAKAIK. Residues 232–256 form a helical membrane-spanning segment; that stretch reads LILLVVIVFFLFWTPYNVMIFLETL. The Extracellular portion of the chain corresponds to 257 to 273; sequence KLYDFFPSCDMRKDLRL. The helical transmembrane segment at 274 to 297 threads the bilayer; sequence ALSVTETVAFSHCCLNPLIYAFAG. The Cytoplasmic segment spans residues 298 to 355; the sequence is EKFRRYLYHLYGKCLAVLCGRSVHVDFSSSESQRSRHGSVLSSNFTYHTSDGDALLLL. Threonine 346 is modified (phosphothreonine).

Belongs to the G-protein coupled receptor 1 family. As to quaternary structure, found in a ternary complex with CX3CL1 and ITGAV:ITGB3 or ITGA4:ITGB1. (Microbial infection) Interacts with human respiratory syncytial virus (HRSV) protein G; this interaction modulates host immune response. In terms of assembly, (Microbial infection) Interacts with HIV-1 envelope polyprotein gp160. This protein is not N-glycosylated which is unusual for G-protein-coupled receptors. As to expression, expressed in lymphoid and neural tissues. Expressed in lymphocyte subsets, such as natural killer (NK) cells, gamma-delta T-cells and terminally differentiated CD8(+) T-cells. Expressed in smooth muscle cells in atherosclerotic plaques.

The protein localises to the cell membrane. In terms of biological role, receptor for the C-X3-C chemokine fractalkine (CX3CL1) present on many early leukocyte cells; CX3CR1-CX3CL1 signaling exerts distinct functions in different tissue compartments, such as immune response, inflammation, cell adhesion and chemotaxis. CX3CR1-CX3CL1 signaling mediates cell migratory functions. Responsible for the recruitment of natural killer (NK) cells to inflamed tissues. Acts as a regulator of inflammation process leading to atherogenesis by mediating macrophage and monocyte recruitment to inflamed atherosclerotic plaques, promoting cell survival. Involved in airway inflammation by promoting interleukin 2-producing T helper (Th2) cell survival in inflamed lung. Involved in the migration of circulating monocytes to non-inflamed tissues, where they differentiate into macrophages and dendritic cells. Acts as a negative regulator of angiogenesis, probably by promoting macrophage chemotaxis. Plays a key role in brain microglia by regulating inflammatory response in the central nervous system (CNS) and regulating synapse maturation. Required to restrain the microglial inflammatory response in the CNS and the resulting parenchymal damage in response to pathological stimuli. Involved in brain development by participating in synaptic pruning, a natural process during which brain microglia eliminates extra synapses during postnatal development. Synaptic pruning by microglia is required to promote the maturation of circuit connectivity during brain development. Acts as an important regulator of the gut microbiota by controlling immunity to intestinal bacteria and fungi. Expressed in lamina propria dendritic cells in the small intestine, which form transepithelial dendrites capable of taking up bacteria in order to provide defense against pathogenic bacteria. Required to initiate innate and adaptive immune responses against dissemination of commensal fungi (mycobiota) component of the gut: expressed in mononuclear phagocytes (MNPs) and acts by promoting induction of antifungal IgG antibodies response to confer protection against disseminated C.albicans or C.auris infection. Also acts as a receptor for C-C motif chemokine CCL26, inducing cell chemotaxis. Its function is as follows. (Microbial infection) Acts as a coreceptor with CD4 for HIV-1 virus envelope protein. Functionally, (Microbial infection) Acts as a coreceptor with CD4 for HIV-1 virus envelope protein. May have more potent HIV-1 coreceptothr activity than isoform 1. (Microbial infection) Acts as a coreceptor with CD4 for HIV-1 virus envelope protein. May have more potent HIV-1 coreceptor activity than isoform 1. The chain is CX3C chemokine receptor 1 from Homo sapiens (Human).